The primary structure comprises 472 residues: Cysteine--tRNA ligase (472 aa).

Position 27 (C27) interacts with Zn(2+). The 'HIGH' region motif lies at 29 to 39 (PTVYNLIHIGN). Zn(2+)-binding residues include C214, H239, and E243. The 'KMSKS' region signature appears at 271–275 (KMSKS). K274 lines the ATP pocket.

The protein belongs to the class-I aminoacyl-tRNA synthetase family. As to quaternary structure, monomer. Zn(2+) serves as cofactor.

The protein resides in the cytoplasm. It catalyses the reaction tRNA(Cys) + L-cysteine + ATP = L-cysteinyl-tRNA(Cys) + AMP + diphosphate. In Lachnospira eligens (strain ATCC 27750 / DSM 3376 / VPI C15-48 / C15-B4) (Eubacterium eligens), this protein is Cysteine--tRNA ligase.